A 160-amino-acid chain; its full sequence is MITLYEAAIKTLITHRKQILKHPDSREILLALGLYWNKTHILLKCHECGKISLTGKHSTKCININCLLILAIKKKNKRMVDTLIGMGADVTYIHFLKNKTKLSYNQLSALKSNSQISLKEFRAICYILYSRLPKKIKQGIRLCKTMAGLCGELLCAFFAP.

The protein belongs to the asfivirus MGF 300 family.

In terms of biological role, plays a role in virus cell tropism, and may be required for efficient virus replication in macrophages. The sequence is that of Protein MGF 300-2R from African swine fever virus (isolate Pig/Kenya/KEN-50/1950) (ASFV).